The sequence spans 376 residues: Glutamate 5-kinase (376 aa).

K18 serves as a coordination point for ATP. Residues S58, D145, and N157 each coordinate substrate. ATP-binding positions include 177–178 (SD) and 218–224 (TGGMASK). Positions 280–358 (TGALTLDAGA…SELPGELRRP (79 aa)) constitute a PUA domain.

It belongs to the glutamate 5-kinase family.

Its subcellular location is the cytoplasm. It catalyses the reaction L-glutamate + ATP = L-glutamyl 5-phosphate + ADP. It functions in the pathway amino-acid biosynthesis; L-proline biosynthesis; L-glutamate 5-semialdehyde from L-glutamate: step 1/2. In terms of biological role, catalyzes the transfer of a phosphate group to glutamate to form L-glutamate 5-phosphate. This Mycobacterium tuberculosis (strain ATCC 25177 / H37Ra) protein is Glutamate 5-kinase.